A 498-amino-acid chain; its full sequence is Germ cell-less protein-like 2 (498 aa).

A Nuclear localization signal motif is present at residues 33 to 39; the sequence is SRKRKRN. Positions 90–160 constitute a BTB domain; that stretch reads SDIKIRALGR…LYTDADLSIT (71 aa).

As to quaternary structure, interacts with CUL3.

It is found in the nucleus matrix. Its pathway is protein modification; protein ubiquitination. Its function is as follows. Possible function in spermatogenesis. Probable substrate-specific adapter of an E3 ubiquitin-protein ligase complex which mediates the ubiquitination and subsequent proteasomal degradation of target proteins. In Mus musculus (Mouse), this protein is Germ cell-less protein-like 2 (Gmcl2).